An 89-amino-acid chain; its full sequence is Putative regulatory protein BPUM_1466 (89 aa).

This sequence belongs to the RemA family.

The protein is Putative regulatory protein BPUM_1466 of Bacillus pumilus (strain SAFR-032).